The sequence spans 808 residues: Phenylalanine--tRNA ligase beta subunit (808 aa).

Residues 40 to 157 (NKGATNVVVG…QSVEPGQDAL (118 aa)) enclose the tRNA-binding domain. The B5 domain maps to 411 to 486 (RSERVIALDL…RLYGYDELPS (76 aa)). Mg(2+)-binding residues include aspartate 464, aspartate 470, glutamate 473, and glutamate 474. The 94-residue stretch at 714 to 807 (PRYPAITRDM…VQKQTGAVLR (94 aa)) folds into the FDX-ACB domain.

Belongs to the phenylalanyl-tRNA synthetase beta subunit family. Type 1 subfamily. As to quaternary structure, tetramer of two alpha and two beta subunits. The cofactor is Mg(2+).

Its subcellular location is the cytoplasm. The catalysed reaction is tRNA(Phe) + L-phenylalanine + ATP = L-phenylalanyl-tRNA(Phe) + AMP + diphosphate + H(+). This is Phenylalanine--tRNA ligase beta subunit from Shouchella clausii (strain KSM-K16) (Alkalihalobacillus clausii).